The chain runs to 154 residues: Secreted RxLR effector protein PITG_21681 (154 aa).

The N-terminal stretch at 1-20 (MRRYAALMVIDAVLLSTSQA) is a signal peptide. Residues 42-70 (SAERDGGIPNKRSLRRISVTESNDGERDE) are disordered. Positions 53–72 (RSLRRISVTESNDGERDEER) match the RxLR-dEER motif.

The protein belongs to the RxLR effector family.

The protein localises to the secreted. It is found in the host cell. Its function is as follows. Secreted effector that is involved in host plant infection. Increases the susceptibility to P.infestans and reduces the plant growth. Affects the expression of host genes. The polypeptide is Secreted RxLR effector protein PITG_21681 (Phytophthora infestans (strain T30-4) (Potato late blight agent)).